The sequence spans 383 residues: Cyclin-D4-2 (383 aa).

The segment covering 51–62 (AAGGGGGSGGGG) has biased composition (gly residues). 3 disordered regions span residues 51–70 (AAGG…EDMF), 313–335 (QPKP…PESP), and 354–383 (ATIA…KLSR). The span at 323-335 (SASASSSSVPESP) shows a compositional bias: low complexity.

This sequence belongs to the cyclin family. Cyclin D subfamily.

In Oryza sativa subsp. japonica (Rice), this protein is Cyclin-D4-2 (CYCD4-2).